A 312-amino-acid chain; its full sequence is DNA primase small subunit PriS (312 aa).

Catalysis depends on residues Asp88, Asp90, and Asp215.

This sequence belongs to the eukaryotic-type primase small subunit family. Heterodimer of a small subunit (PriS) and a large subunit (PriL). Requires Mg(2+) as cofactor. Mn(2+) serves as cofactor.

Its function is as follows. Catalytic subunit of DNA primase, an RNA polymerase that catalyzes the synthesis of short RNA molecules used as primers for DNA polymerase during DNA replication. The small subunit contains the primase catalytic core and has DNA synthesis activity on its own. Binding to the large subunit stabilizes and modulates the activity, increasing the rate of DNA synthesis while decreasing the length of the DNA fragments, and conferring RNA synthesis capability. The DNA polymerase activity may enable DNA primase to also catalyze primer extension after primer synthesis. May also play a role in DNA repair. This chain is DNA primase small subunit PriS, found in Pyrobaculum calidifontis (strain DSM 21063 / JCM 11548 / VA1).